Reading from the N-terminus, the 158-residue chain is Transcription elongation factor GreA (158 aa).

The stretch at 14 to 76 (LDQLKDELTH…EIESILKNVK (63 aa)) forms a coiled coil.

It belongs to the GreA/GreB family.

Functionally, necessary for efficient RNA polymerase transcription elongation past template-encoded arresting sites. The arresting sites in DNA have the property of trapping a certain fraction of elongating RNA polymerases that pass through, resulting in locked ternary complexes. Cleavage of the nascent transcript by cleavage factors such as GreA or GreB allows the resumption of elongation from the new 3'terminus. GreA releases sequences of 2 to 3 nucleotides. The sequence is that of Transcription elongation factor GreA from Acholeplasma laidlawii (strain PG-8A).